Consider the following 371-residue polypeptide: Histidinol-phosphate aminotransferase 2 (371 aa).

Lys-232 carries the post-translational modification N6-(pyridoxal phosphate)lysine.

It belongs to the class-II pyridoxal-phosphate-dependent aminotransferase family. Histidinol-phosphate aminotransferase subfamily. As to quaternary structure, homodimer. Pyridoxal 5'-phosphate serves as cofactor.

It catalyses the reaction L-histidinol phosphate + 2-oxoglutarate = 3-(imidazol-4-yl)-2-oxopropyl phosphate + L-glutamate. Its pathway is amino-acid biosynthesis; L-histidine biosynthesis; L-histidine from 5-phospho-alpha-D-ribose 1-diphosphate: step 7/9. This Methylococcus capsulatus (strain ATCC 33009 / NCIMB 11132 / Bath) protein is Histidinol-phosphate aminotransferase 2.